The following is a 152-amino-acid chain: Nucleoside diphosphate kinase (152 aa).

Residues Lys11, Phe59, Arg87, Thr93, Arg104, and Asn114 each contribute to the ATP site. The Pros-phosphohistidine intermediate role is filled by His117.

This sequence belongs to the NDK family. Homotetramer. Mg(2+) is required as a cofactor.

The protein localises to the cytoplasm. It catalyses the reaction dZDP + ATP = dZTP + ADP. The enzyme catalyses a 2'-deoxyribonucleoside 5'-diphosphate + ATP = a 2'-deoxyribonucleoside 5'-triphosphate + ADP. It carries out the reaction a ribonucleoside 5'-diphosphate + ATP = a ribonucleoside 5'-triphosphate + ADP. Its pathway is purine metabolism. In terms of biological role, major role in the synthesis of nucleoside triphosphates other than ATP. The ATP gamma phosphate is transferred to the NDP beta phosphate via a ping-pong mechanism, using a phosphorylated active-site intermediate. Its function is as follows. (Microbial infection) Catalyzes the phosphorylation of dZDP to dZTP, when the bacterium is infected by a phage that produces the substrate for the synthesis of dZTP (2- amino-2'-deoxyadenosine 5'-triphosphate), which is then used by the phage as a DNA polymerase substrate. This chain is Nucleoside diphosphate kinase, found in Synechococcus sp. (strain CC9311).